The following is a 465-amino-acid chain: ATP synthase subunit beta (465 aa).

Gly-152–Thr-159 lines the ATP pocket.

This sequence belongs to the ATPase alpha/beta chains family. In terms of assembly, F-type ATPases have 2 components, CF(1) - the catalytic core - and CF(0) - the membrane proton channel. CF(1) has five subunits: alpha(3), beta(3), gamma(1), delta(1), epsilon(1). CF(0) has three main subunits: a(1), b(2) and c(9-12). The alpha and beta chains form an alternating ring which encloses part of the gamma chain. CF(1) is attached to CF(0) by a central stalk formed by the gamma and epsilon chains, while a peripheral stalk is formed by the delta and b chains.

It is found in the cell inner membrane. It carries out the reaction ATP + H2O + 4 H(+)(in) = ADP + phosphate + 5 H(+)(out). Its function is as follows. Produces ATP from ADP in the presence of a proton gradient across the membrane. The catalytic sites are hosted primarily by the beta subunits. The polypeptide is ATP synthase subunit beta (Campylobacter hominis (strain ATCC BAA-381 / DSM 21671 / CCUG 45161 / LMG 19568 / NCTC 13146 / CH001A)).